A 121-amino-acid chain; its full sequence is Small ribosomal subunit protein bS6 (121 aa).

The segment at 99–121 (PSLMMRNVEREEARKTQQQEFAA) is disordered. The span at 105–115 (NVEREEARKTQ) shows a compositional bias: basic and acidic residues.

The protein belongs to the bacterial ribosomal protein bS6 family.

Its function is as follows. Binds together with bS18 to 16S ribosomal RNA. The chain is Small ribosomal subunit protein bS6 from Polaromonas naphthalenivorans (strain CJ2).